Here is a 435-residue protein sequence, read N- to C-terminus: Adenylosuccinate synthetase (435 aa).

Residues 12–18 and 40–42 each bind GTP; these read GDEGKGK and GHT. Catalysis depends on aspartate 13, which acts as the Proton acceptor. Mg(2+)-binding residues include aspartate 13 and glycine 40. IMP-binding positions include 13-16, 38-41, threonine 130, arginine 144, glutamine 224, threonine 239, and arginine 301; these read DEGK and NAGH. Residue histidine 41 is the Proton donor of the active site. Substrate is bound at residue 297 to 303; it reads TVSNRKR. GTP-binding positions include arginine 303, 329–331, and 411–413; these read KLD and SAG.

It belongs to the adenylosuccinate synthetase family. In terms of assembly, homodimer. It depends on Mg(2+) as a cofactor.

It localises to the cytoplasm. The enzyme catalyses IMP + L-aspartate + GTP = N(6)-(1,2-dicarboxyethyl)-AMP + GDP + phosphate + 2 H(+). It participates in purine metabolism; AMP biosynthesis via de novo pathway; AMP from IMP: step 1/2. In terms of biological role, plays an important role in the de novo pathway of purine nucleotide biosynthesis. Catalyzes the first committed step in the biosynthesis of AMP from IMP. This Wolbachia sp. subsp. Brugia malayi (strain TRS) protein is Adenylosuccinate synthetase.